The sequence spans 46 residues: Alpha-1-antiproteinase (46 aa).

Serine 30 is modified (phosphoserine).

The protein belongs to the serpin family. N-glycosylated; contains bi- and triantennary glycans with a bisecting N-acetylglucosamine and fucose residue. As to expression, plasma.

It localises to the secreted. In Notamacropus eugenii (Tammar wallaby), this protein is Alpha-1-antiproteinase.